The chain runs to 547 residues: Methyl-accepting chemotaxis citrate transducer (547 aa).

Over 1-5 (MKNIK) the chain is Cytoplasmic. A helical transmembrane segment spans residues 6 to 29 (VITGVIATLGIFSALLLVTGILFY). Residues 30–189 (SAVSSDRLNF…ASDQNQSSFT (160 aa)) lie on the Periplasmic side of the membrane. Residues 190–213 (QMQWTLGIILLIVLIVLAFIWLGL) form a helical membrane-spanning segment. Topologically, residues 214-547 (QRVLLRPLQR…AAEQANWESF (334 aa)) are cytoplasmic. Residues 215 to 267 (RVLLRPLQRIMAHIQTIADGDLTHEIEAEGRSEMGQLAAGLKTMQQSLIRTVS) enclose the HAMP domain. The Methyl-accepting transducer domain occupies 272-501 (NADSIYTGAG…ESAAAAAALE (230 aa)). Position 296 is a glutamate methyl ester (Gln) (Gln-296). Residue Glu-303 is modified to Glutamate methyl ester (Glu). Gln-310 is subject to Glutamate methyl ester (Gln). The interval 317–336 (QNTDNARQATGLAKTASETA) is disordered. Glutamate methyl ester (Glu) occurs at positions 492 and 501. Residues 518–547 (KQPRREASPTTLSKGLTPQPAAEQANWESF) form a disordered region.

It belongs to the methyl-accepting chemotaxis (MCP) protein family. Post-translationally, methylation level is increased by citrate and decreased by phenol.

It localises to the cell inner membrane. Acts as a receptor for citrate and mediates taxis away from phenol. Also mediates an attractant response to metal-citrate complexes. The sequence is that of Methyl-accepting chemotaxis citrate transducer (tcp) from Salmonella typhimurium (strain LT2 / SGSC1412 / ATCC 700720).